The primary structure comprises 286 residues: Polyamine aminopropyltransferase 1 (286 aa).

A PABS domain is found at 1–235; it reads MSDYQETLYQ…GAMTFAWGST (235 aa). Position 30 (Q30) interacts with S-methyl-5'-thioadenosine. H61 and D85 together coordinate spermidine. S-methyl-5'-thioadenosine-binding positions include E105 and 137–138; that span reads DG. Catalysis depends on D155, which acts as the Proton acceptor. Residue 155–158 participates in spermidine binding; sequence DSTD. P162 is a binding site for S-methyl-5'-thioadenosine.

This sequence belongs to the spermidine/spermine synthase family. Homodimer or homotetramer.

The protein localises to the cytoplasm. The catalysed reaction is S-adenosyl 3-(methylsulfanyl)propylamine + putrescine = S-methyl-5'-thioadenosine + spermidine + H(+). The protein operates within amine and polyamine biosynthesis; spermidine biosynthesis; spermidine from putrescine: step 1/1. Functionally, catalyzes the irreversible transfer of a propylamine group from the amino donor S-adenosylmethioninamine (decarboxy-AdoMet) to putrescine (1,4-diaminobutane) to yield spermidine. In Pseudomonas aeruginosa (strain ATCC 15692 / DSM 22644 / CIP 104116 / JCM 14847 / LMG 12228 / 1C / PRS 101 / PAO1), this protein is Polyamine aminopropyltransferase 1.